A 475-amino-acid chain; its full sequence is Ankyrin repeat, SAM and basic leucine zipper domain-containing protein 1 (475 aa).

The tract at residues 1-25 (MAAGALRGLPVAGGGESSESEDDGW) is disordered. Serine 17, serine 18, and serine 20 each carry phosphoserine. ANK repeat units follow at residues 45 to 74 (EKKEKFKKAMTIGDVSLVQELLDSGISVDS), 78 to 107 (YGWTPLMYAASVANAELVRVLLDRGANASF), 110 to 144 (DKQSILITACSARGSEEQILKCVELLLSRNADPNV), 148 to 177 (RLMTPIMYAARDGHTQVVALLVAHGAEVNT), 181 to 210 (NGYTALTWAARQGHKNIVLKLLELGANKML), and 214 to 243 (DGKMPSEIAKRNKHHEIFNLLSFTLNPLEG). The SAM domain occupies 272–334 (SYTAFGDLEV…KILAALKELQ (63 aa)).

As to quaternary structure, interacts with DDX4, PIWIL1, RANBP9 and TDRD1.

The protein localises to the cytoplasm. In terms of biological role, plays a central role during spermatogenesis by repressing transposable elements and preventing their mobilization, which is essential for the germline integrity. Acts via the piRNA metabolic process, which mediates the repression of transposable elements during meiosis by forming complexes composed of piRNAs and Piwi proteins and governs the methylation and subsequent repression of transposons. Its association with pi-bodies suggests a participation in the primary piRNAs metabolic process. Required prior to the pachytene stage to facilitate the production of multiple types of piRNAs, including those associated with repeats involved in the regulation of retrotransposons. May act by mediating protein-protein interactions during germ cell maturation. The protein is Ankyrin repeat, SAM and basic leucine zipper domain-containing protein 1 (ASZ1) of Pongo abelii (Sumatran orangutan).